Reading from the N-terminus, the 135-residue chain is MNTLLKKYRKQRYAWLRFLLFSKIEGSLPVALRILLSLQPFCCNIYRKYYQENKKVKSTSGNTALKIIEKLESLVSNLRLKYSQMFSLLFLHSYNCLQSLATETFRIIKKREKNLLSLLIPGSCIEIARHFVLKE.

This is an uncharacterized protein from Saccharomyces cerevisiae (strain ATCC 204508 / S288c) (Baker's yeast).